The following is a 247-amino-acid chain: 5-hydroxytryptamine receptor 2A (247 aa).

Lys-1 is a topological domain (extracellular). A helical transmembrane segment spans residues 2 to 26 (LCAIWIYLDVLFSTASIMHLCAISL). Cys-3 and Cys-82 are joined by a disulfide. Residue Asp-10 coordinates serotonin. Positions 27 to 29 (DRY) match the DRY motif; important for ligand-induced conformation changes motif. At 27-46 (DRYVAIQNPIHHSRFNSRTK) the chain is on the cytoplasmic side. Residues 47 to 70 (AFLKIIAVWTISVGISMPVPVFGL) form a helical membrane-spanning segment. At 71 to 87 (QDDSKVFKEGSCLLADD) the chain is on the extracellular side. The chain crosses the membrane as a helical span at residues 88–113 (NFVLIGSFVAFFIPLTIMVITYFLTI). The Cytoplasmic segment spans residues 114-177 (KSLQKEATLC…QSISNEQKAC (64 aa)). The residue at position 135 (Ser-135) is a Phosphoserine. The chain crosses the membrane as a helical span at residues 178–203 (KVLGIVFFLFVVMWCPFFVTNIMAVI). Asn-198 is a binding site for serotonin. Cysteines 204 and 208 form a disulfide. At 204–211 (CKESCNED) the chain is on the extracellular side. A helical transmembrane segment spans residues 212–237 (VIGALLNVFVWIGYLSSAVNPLVYTL). An NPxxY motif; important for ligand-induced conformation changes and signaling motif is present at residues 231–235 (NPLVY). The Cytoplasmic portion of the chain corresponds to 238-247 (FNKTYRSAFA).

It belongs to the G-protein coupled receptor 1 family. In terms of assembly, interacts (via C-terminus) with MPDZ and PATJ. May interact (via C-terminus) with MPP3, PRDX6, DLG4, DLG1, CASK, APBA1 and MAGI2. Interacts with GRM2 and DRD2; this may affect signaling. As to expression, detected in adult intestine, especially in mucosal epithelium, longitudinal and circular layers of muscularis externa and myenteric plexuses. Highly expressed in Paneth cells, and detected at lower levels in enterocytes (at protein level).

The protein localises to the cell membrane. It is found in the cell projection. It localises to the dendrite. Its subcellular location is the axon. The protein resides in the cytoplasmic vesicle. The protein localises to the membrane. It is found in the caveola. It localises to the presynapse. Its activity is regulated as follows. G-protein coupled receptor activity is regulated by lipids: oleamide increases HTR2A-mediated activity. Its function is as follows. G-protein coupled receptor for 5-hydroxytryptamine (serotonin). Also functions as a receptor for various drugs and psychoactive substances, including mescaline, psilocybin, 1-(2,5-dimethoxy-4-iodophenyl)-2-aminopropane (DOI) and lysergic acid diethylamide (LSD). Ligand binding causes a conformation change that triggers signaling via guanine nucleotide-binding proteins (G proteins) and modulates the activity of downstream effectors. HTR2A is coupled to G(q)/G(11) G alpha proteins and activates phospholipase C-beta, releasing diacylglycerol (DAG) and inositol 1,4,5-trisphosphate (IP3) second messengers that modulate the activity of phosphatidylinositol 3-kinase and promote the release of Ca(2+) ions from intracellular stores, respectively. Beta-arrestin family members inhibit signaling via G proteins and mediate activation of alternative signaling pathways. Affects neural activity, perception, cognition and mood. Plays a role in the regulation of behavior, including responses to anxiogenic situations and psychoactive substances. Plays a role in intestinal smooth muscle contraction, and may play a role in arterial vasoconstriction. This Cavia porcellus (Guinea pig) protein is 5-hydroxytryptamine receptor 2A (HTR2A).